A 437-amino-acid chain; its full sequence is Citrate synthase (437 aa).

Catalysis depends on residues histidine 316 and aspartate 372.

Belongs to the citrate synthase family. In terms of assembly, homohexamer.

It catalyses the reaction oxaloacetate + acetyl-CoA + H2O = citrate + CoA + H(+). It functions in the pathway carbohydrate metabolism; tricarboxylic acid cycle; isocitrate from oxaloacetate: step 1/2. Weakly inhibited by ATP (apparent Ki = 10 mm). The chain is Citrate synthase (gltA) from Corynebacterium glutamicum (strain ATCC 13032 / DSM 20300 / JCM 1318 / BCRC 11384 / CCUG 27702 / LMG 3730 / NBRC 12168 / NCIMB 10025 / NRRL B-2784 / 534).